We begin with the raw amino-acid sequence, 356 residues long: tRNA N6-adenosine threonylcarbamoyltransferase (356 aa).

Positions 115 and 119 each coordinate Fe cation. Substrate-binding positions include 138–142 (LVSGG), aspartate 171, glycine 184, and asparagine 277. Aspartate 305 provides a ligand contact to Fe cation.

Belongs to the KAE1 / TsaD family. Fe(2+) is required as a cofactor.

Its subcellular location is the cytoplasm. The catalysed reaction is L-threonylcarbamoyladenylate + adenosine(37) in tRNA = N(6)-L-threonylcarbamoyladenosine(37) in tRNA + AMP + H(+). Functionally, required for the formation of a threonylcarbamoyl group on adenosine at position 37 (t(6)A37) in tRNAs that read codons beginning with adenine. Is involved in the transfer of the threonylcarbamoyl moiety of threonylcarbamoyl-AMP (TC-AMP) to the N6 group of A37, together with TsaE and TsaB. TsaD likely plays a direct catalytic role in this reaction. The protein is tRNA N6-adenosine threonylcarbamoyltransferase of Polaromonas naphthalenivorans (strain CJ2).